The sequence spans 446 residues: uncharacterized protein (446 aa).

12 helical membrane-spanning segments follow: residues 20–40, 42–62, 95–115, 127–147, 160–180, 205–225, 237–257, 284–304, 331–351, 355–375, 388–408, and 414–434; these read LIGV…IAIV, SGFS…FVFE, WVYW…ISLF, VFAS…LSVF, AAIF…LSGG, LIYA…AVHL, LMLA…LLLV, IFNG…LFAV, WPAL…SLVL, IYEH…LFIL, GKTQ…GTLF, and PGFF…MIYQ.

The protein belongs to the amino acid-polyamine-organocation (APC) superfamily.

It is found in the cell membrane. This is an uncharacterized protein from Bacillus subtilis (strain 168).